The following is a 286-amino-acid chain: Transcription factor bHLH137 (286 aa).

Residues 63 to 84 (SGSEKLANTTKTATTGSSSCDQ) show a composition bias toward polar residues. The interval 63–149 (SGSEKLANTT…RGQATDSHSL (87 aa)) is disordered. The bHLH domain maps to 142–192 (QATDSHSLAERVRREKISERMRTLQNLVPGCDKVTGKALMLDEIINYVQTL).

Homodimer.

It is found in the nucleus. The sequence is that of Transcription factor bHLH137 (BHLH137) from Arabidopsis thaliana (Mouse-ear cress).